Reading from the N-terminus, the 189-residue chain is Peptidyl-tRNA hydrolase (189 aa).

Tyr14 provides a ligand contact to tRNA. His19 functions as the Proton acceptor in the catalytic mechanism. TRNA is bound by residues Tyr64, Asn66, and Asn112.

It belongs to the PTH family. Monomer.

It localises to the cytoplasm. It carries out the reaction an N-acyl-L-alpha-aminoacyl-tRNA + H2O = an N-acyl-L-amino acid + a tRNA + H(+). Hydrolyzes ribosome-free peptidyl-tRNAs (with 1 or more amino acids incorporated), which drop off the ribosome during protein synthesis, or as a result of ribosome stalling. Functionally, catalyzes the release of premature peptidyl moieties from peptidyl-tRNA molecules trapped in stalled 50S ribosomal subunits, and thus maintains levels of free tRNAs and 50S ribosomes. This chain is Peptidyl-tRNA hydrolase, found in Clostridium botulinum (strain Kyoto / Type A2).